Consider the following 130-residue polypeptide: Large ribosomal subunit protein bL20 (130 aa).

This sequence belongs to the bacterial ribosomal protein bL20 family.

Binds directly to 23S ribosomal RNA and is necessary for the in vitro assembly process of the 50S ribosomal subunit. It is not involved in the protein synthesizing functions of that subunit. The chain is Large ribosomal subunit protein bL20 from Nocardioides sp. (strain ATCC BAA-499 / JS614).